The sequence spans 92 residues: PqqA binding protein (92 aa).

The protein belongs to the PqqD family. Monomer. Interacts with PqqE.

Its pathway is cofactor biosynthesis; pyrroloquinoline quinone biosynthesis. Its function is as follows. Functions as a PqqA binding protein and presents PqqA to PqqE, in the pyrroloquinoline quinone (PQQ) biosynthetic pathway. The sequence is that of PqqA binding protein from Klebsiella pneumoniae (strain 342).